Consider the following 252-residue polypeptide: MERVLIVNADDFGLSKGQNYGIVEAYRNGVVTSTTALVNGEAIDHAAQLSRELPALGVGMHFVLTLGKPVSEMPGLTRDGLLGKWIWQMAEEDTLPLDEIAHELACQYQRFIDVFGREPTHLDSHHHVHMFPQIFPIVARFAAQRGIALRIDRQTVLNADDLPSDLRSTQGFSSEFYGEEITEACFLRILDASAHRGEASLEVMCHPAFVDNIIRQSAYCYPRLTELEVLTSASLKAGIAERVYRPGSFLDI.

His-61 and His-125 together coordinate Mg(2+).

It belongs to the YdjC deacetylase family. ChbG subfamily. As to quaternary structure, homodimer. Mg(2+) is required as a cofactor.

The protein resides in the cytoplasm. The enzyme catalyses N,N'-diacetylchitobiose + H2O = N-acetyl-beta-D-glucosaminyl-(1-&gt;4)-D-glucosamine + acetate. The catalysed reaction is diacetylchitobiose-6'-phosphate + H2O = N'-monoacetylchitobiose-6'-phosphate + acetate. The protein operates within glycan degradation; chitin degradation. In terms of biological role, involved in the degradation of chitin. ChbG is essential for growth on the acetylated chitooligosaccharides chitobiose and chitotriose but is dispensable for growth on cellobiose and chitosan dimer, the deacetylated form of chitobiose. Deacetylation of chitobiose-6-P and chitotriose-6-P is necessary for both the activation of the chb promoter by the regulatory protein ChbR and the hydrolysis of phosphorylated beta-glucosides by the phospho-beta-glucosidase ChbF. Catalyzes the removal of only one acetyl group from chitobiose-6-P to yield monoacetylchitobiose-6-P, the inducer of ChbR and the substrate of ChbF. In Salmonella typhi, this protein is Chitooligosaccharide deacetylase.